The chain runs to 274 residues: Undecaprenyl-diphosphatase (274 aa).

8 helical membrane passes run 1 to 21 (MDWF…FLPI), 48 to 68 (VVIQ…DFAG), 84 to 104 (LGVI…GDVI), 108 to 128 (LFRP…MWVI), 143 to 163 (IGLG…LWPG), 187 to 207 (FSFY…FIKS), 214 to 234 (IGLL…YLAI), and 254 to 274 (VIFG…NGGL).

This sequence belongs to the UppP family.

The protein localises to the cell membrane. The catalysed reaction is di-trans,octa-cis-undecaprenyl diphosphate + H2O = di-trans,octa-cis-undecaprenyl phosphate + phosphate + H(+). Functionally, catalyzes the dephosphorylation of undecaprenyl diphosphate (UPP). Confers resistance to bacitracin. In Deinococcus geothermalis (strain DSM 11300 / CIP 105573 / AG-3a), this protein is Undecaprenyl-diphosphatase.